We begin with the raw amino-acid sequence, 413 residues long: uncharacterized protein (413 aa).

A run of 12 helical transmembrane segments spans residues 42–62 (FLGGFSSFSILYCVQSILPVF), 75–95 (LSLSAATATMSIGTLFIGPLS), 109–129 (LIAAVLTIICSISNNWTVIVF), 133–153 (LTGLALSGVVAVAMTYIVEEV), 157–179 (SVSFCMGLYISGNTIGGCSGRIL), 191–211 (IAFIVIGFFSLMSSCLFLYFL), 238–258 (PTLLILFAIGFMLMGSFITIF), 265–285 (LMLSPFFLSSSNIGFLSIIYL), 304–324 (SSILRIALLLMILGLLMTQYN), 326–346 (IFIIILGLVIFSSGFFASHSI), 362–382 (ATSLYLFFYYLGSSIFGTFGG), and 383–403 (FFWFYLKWIGISSFIIIILIF).

It belongs to the major facilitator superfamily.

It is found in the cell membrane. This is an uncharacterized protein from Buchnera aphidicola subsp. Schizaphis graminum (strain Sg).